The sequence spans 103 residues: Nematocin (103 aa).

Positions 1 to 19 (MGSSPILLVLAISIGLASA) are cleaved as a signal peptide. Cysteines 20 and 25 form a disulfide. Residue Y30 is modified to Tyrosine amide. Residues 31–103 (GRTIRCSSCG…QGGCQTSAMC (73 aa)) constitute a propeptide that is removed on maturation.

The protein belongs to the vasopressin/oxytocin family. Detected in thermosensory AFD neurons, neurosecretory NSM cells, AVK interneurons, pharyngeal neuron M5, and the mechanosensory DVA neuron. Detected in male-specific CP motor neurons.

It localises to the secreted. Ligand for the G-protein coupled receptor ntr-1. Plays a role in gustatory associative learning. Also plays a role in male mating behavior. This chain is Nematocin, found in Caenorhabditis elegans.